A 291-amino-acid chain; its full sequence is Phytanoyl-CoA dioxygenase domain-containing protein 1 (291 aa).

2-oxoglutarate is bound by residues lysine 102, methionine 141, 156 to 158 (HQD), and tryptophan 174. Residues histidine 156 and aspartate 158 each contribute to the Fe cation site. Histidine 246 is a binding site for Fe cation. Positions 248 and 257 each coordinate 2-oxoglutarate.

This sequence belongs to the PhyH family. PHYHD1 subfamily. The cofactor is Fe cation.

In terms of biological role, 2-oxoglutarate(2OG)-dependent dioxygenase that catalyzes the conversion of 2-oxoglutarate to succinate and CO(2) in an iron-dependent manner. However, does not couple 2OG turnover to the hydroxylation of acyl-coenzyme A derivatives, implying that it is not directly involved in phytanoyl coenzyme-A metabolism. Does not show detectable activity towards fatty acid CoA thioesters. The sequence is that of Phytanoyl-CoA dioxygenase domain-containing protein 1 (phyhd1) from Danio rerio (Zebrafish).